An 854-amino-acid chain; its full sequence is ATP-dependent zinc metalloprotease FtsH (854 aa).

Residues 1–5 lie on the Cytoplasmic side of the membrane; sequence MNRKT. The helical transmembrane segment at 6-26 threads the bilayer; it reads VFRNVLLVAVVLLVIYAFSYF. Residues 27–112 lie on the Extracellular side of the membrane; sequence SNDTRDFKTV…FNTTVTQESW (86 aa). Residues 113–133 traverse the membrane as a helical segment; it reads LTSILLFVLPMIILFGIFFFV. The Cytoplasmic portion of the chain corresponds to 134-854; that stretch reads MNRMQGGGGR…ARWDGPDGSR (721 aa). Residue 207–214 participates in ATP binding; it reads GPPGTGKT. Histidine 429 contributes to the Zn(2+) binding site. The active site involves glutamate 430. Residues histidine 433 and aspartate 505 each contribute to the Zn(2+) site. The interval 658–854 is disordered; it reads AGAPNSGVPN…ARWDGPDGSR (197 aa). 2 stretches are compositionally biased toward low complexity: residues 661 to 692 and 698 to 719; these read PNSGVPNGGVPNNGGLPNNGNQGPSNGYAQPS and APQQTPQPGTPDYGAPAGWSAP. Over residues 720–730 the composition is skewed to pro residues; sequence GWPPRENPSPT. Residues 749 to 778 are compositionally biased toward low complexity; sequence NQSQGQYGQPQHGQPQPDQGQYGQPHPGQQ. Polar residues predominate over residues 812–822; sequence GNPSGENQWQS. Residues 825-834 are compositionally biased toward pro residues; it reads PEQPQTPPPH.

The protein in the central section; belongs to the AAA ATPase family. This sequence in the C-terminal section; belongs to the peptidase M41 family. In terms of assembly, homohexamer. The cofactor is Zn(2+).

Its subcellular location is the cell membrane. Functionally, acts as a processive, ATP-dependent zinc metallopeptidase for both cytoplasmic and membrane proteins. Plays a role in the quality control of integral membrane proteins. This is ATP-dependent zinc metalloprotease FtsH from Rhodococcus erythropolis (strain PR4 / NBRC 100887).